A 681-amino-acid polypeptide reads, in one-letter code: DNA ligase (681 aa).

Residues Asp-35 to Asp-39, Ser-84 to Leu-85, and Glu-115 contribute to the NAD(+) site. Lys-117 acts as the N6-AMP-lysine intermediate in catalysis. The NAD(+) site is built by Arg-138, Glu-175, Lys-293, and Lys-317. Zn(2+) is bound by residues Cys-411, Cys-414, Cys-429, and Cys-435. Positions Arg-598–Glu-681 constitute a BRCT domain.

Belongs to the NAD-dependent DNA ligase family. LigA subfamily. Mg(2+) serves as cofactor. It depends on Mn(2+) as a cofactor.

It catalyses the reaction NAD(+) + (deoxyribonucleotide)n-3'-hydroxyl + 5'-phospho-(deoxyribonucleotide)m = (deoxyribonucleotide)n+m + AMP + beta-nicotinamide D-nucleotide.. Its function is as follows. DNA ligase that catalyzes the formation of phosphodiester linkages between 5'-phosphoryl and 3'-hydroxyl groups in double-stranded DNA using NAD as a coenzyme and as the energy source for the reaction. It is essential for DNA replication and repair of damaged DNA. The sequence is that of DNA ligase from Nitrosomonas europaea (strain ATCC 19718 / CIP 103999 / KCTC 2705 / NBRC 14298).